The chain runs to 235 residues: MRIDDPSNAVSDLALLGLMQLISPALPIGAFAWSQGLESAFELGWVNNEAQLGEWLEGVLGDGLTRCELPVLARLQRCWANNDGDGLAFWNDWLHANRETAELSDEDTRLGQALIRLLNSLELQPQKALGHVELPEEPGYVTVFAWTAHQRQVPVRQALLGFAWGWLENQLAAACKALPLGHTAAQRLNETLRPQLVAAVDKALTLTDEQLGPILPGLALGSAQHETQYSRLFRS.

Belongs to the UreF family. UreD, UreF and UreG form a complex that acts as a GTP-hydrolysis-dependent molecular chaperone, activating the urease apoprotein by helping to assemble the nickel containing metallocenter of UreC. The UreE protein probably delivers the nickel.

It localises to the cytoplasm. In terms of biological role, required for maturation of urease via the functional incorporation of the urease nickel metallocenter. This Psychrobacter cryohalolentis (strain ATCC BAA-1226 / DSM 17306 / VKM B-2378 / K5) protein is Urease accessory protein UreF.